Here is a 344-residue protein sequence, read N- to C-terminus: uncharacterized protein (344 aa).

A run of 6 helical transmembrane segments spans residues 155-175, 181-201, 221-241, 254-274, 291-311, and 319-339; these read IARI…IFLV, WGLG…AYGW, LSFI…VNGF, ISSF…FALL, FTII…AAYV, and ALQN…IGVF.

The protein to M.jannaschii MJ1032.

It localises to the cell membrane. This is an uncharacterized protein from Archaeoglobus fulgidus (strain ATCC 49558 / DSM 4304 / JCM 9628 / NBRC 100126 / VC-16).